Consider the following 69-residue polypeptide: UPF0346 protein llmg_2280 (69 aa).

Belongs to the UPF0346 family.

This chain is UPF0346 protein llmg_2280, found in Lactococcus lactis subsp. cremoris (strain MG1363).